Here is a 440-residue protein sequence, read N- to C-terminus: Serine hydroxymethyltransferase (440 aa).

Residue 123–125 (GHI) participates in (6S)-5,6,7,8-tetrahydrofolate binding. At Lys238 the chain carries N6-(pyridoxal phosphate)lysine.

This sequence belongs to the SHMT family. In terms of assembly, homodimer. Pyridoxal 5'-phosphate is required as a cofactor.

The protein localises to the cytoplasm. It functions in the pathway amino-acid biosynthesis; glycine biosynthesis; glycine from L-serine: step 1/1. In terms of biological role, catalyzes the reversible interconversion of serine and glycine with a modified folate serving as the one-carbon carrier. Also exhibits a pteridine-independent aldolase activity toward beta-hydroxyamino acids, producing glycine and aldehydes, via a retro-aldol mechanism. This Nitrosopumilus maritimus (strain SCM1) protein is Serine hydroxymethyltransferase.